The sequence spans 184 residues: Ribulose bisphosphate carboxylase small subunit, chloroplastic 5 (184 aa).

A chloroplast-targeting transit peptide spans 1–43 (MAAAMMNKTIVVSKDGCARSSSIPKVATNKMGFASAVAMKKSR).

This sequence belongs to the RuBisCO small chain family. Heterohexadecamer of 8 large and 8 small subunits.

It localises to the plastid. Its subcellular location is the chloroplast. RuBisCO catalyzes two reactions: the carboxylation of D-ribulose 1,5-bisphosphate, the primary event in carbon dioxide fixation, as well as the oxidative fragmentation of the pentose substrate. Both reactions occur simultaneously and in competition at the same active site. Although the small subunit is not catalytic it is essential for maximal activity. In Acetabularia peniculus (Green alga), this protein is Ribulose bisphosphate carboxylase small subunit, chloroplastic 5.